The primary structure comprises 196 residues: Endoribonuclease YbeY (196 aa).

The Zn(2+) site is built by His120, His124, and His130.

Belongs to the endoribonuclease YbeY family. Requires Zn(2+) as cofactor.

It localises to the cytoplasm. In terms of biological role, single strand-specific metallo-endoribonuclease involved in late-stage 70S ribosome quality control and in maturation of the 3' terminus of the 16S rRNA. The polypeptide is Endoribonuclease YbeY (Corynebacterium glutamicum (strain ATCC 13032 / DSM 20300 / JCM 1318 / BCRC 11384 / CCUG 27702 / LMG 3730 / NBRC 12168 / NCIMB 10025 / NRRL B-2784 / 534)).